The following is a 640-amino-acid chain: Telomere repeat-binding protein 4 (640 aa).

A Ubiquitin-like domain is found at 343 to 422 (VKFSIKSLRI…LGNLGFTLEP (80 aa)). The disordered stretch occupies residues 442-464 (TDSTKLSERSAASPALETGIPLP). Residues 530–589 (SQRRTRRPFSVTEVEALVSAVEEVGTGRWRDVKLRSFENASHRTYVDLKDKWKTLVHTAS) enclose the HTH myb-type domain. The H-T-H motif DNA-binding region spans 558–585 (WRDVKLRSFENASHRTYVDLKDKWKTLV).

As to quaternary structure, homomultimer. Interacts with SNL1 (via PAH2). Interacts with STO. As to expression, expressed ubiquitously. Highest expression in flowers and roots.

Its subcellular location is the nucleus. Functionally, binds specifically to the plant telomeric double-stranded DNA sequences 5'-TTTAGGG-3'. At least 2 repeats of telomeric sequences are required for binding. Induces DNA bending. This is Telomere repeat-binding protein 4 (TRP4) from Arabidopsis thaliana (Mouse-ear cress).